Consider the following 198-residue polypeptide: ATP-dependent Clp protease proteolytic subunit (198 aa).

Serine 102 serves as the catalytic Nucleophile. Residue histidine 127 is part of the active site.

This sequence belongs to the peptidase S14 family. Fourteen ClpP subunits assemble into 2 heptameric rings which stack back to back to give a disk-like structure with a central cavity, resembling the structure of eukaryotic proteasomes.

It is found in the cytoplasm. It catalyses the reaction Hydrolysis of proteins to small peptides in the presence of ATP and magnesium. alpha-casein is the usual test substrate. In the absence of ATP, only oligopeptides shorter than five residues are hydrolyzed (such as succinyl-Leu-Tyr-|-NHMec, and Leu-Tyr-Leu-|-Tyr-Trp, in which cleavage of the -Tyr-|-Leu- and -Tyr-|-Trp bonds also occurs).. Cleaves peptides in various proteins in a process that requires ATP hydrolysis. Has a chymotrypsin-like activity. Plays a major role in the degradation of misfolded proteins. This is ATP-dependent Clp protease proteolytic subunit from Brachyspira hyodysenteriae (strain ATCC 49526 / WA1).